A 199-amino-acid chain; its full sequence is Recombination protein RecR (199 aa).

Residues 57 to 72 form a C4-type zinc finger; it reads CERCNNLSEAPLCAVC. One can recognise a Toprim domain in the interval 80–174; it reads SILCVVESPA…TISRIARGVP (95 aa).

The protein belongs to the RecR family.

May play a role in DNA repair. It seems to be involved in an RecBC-independent recombinational process of DNA repair. It may act with RecF and RecO. The polypeptide is Recombination protein RecR (Acidithiobacillus ferrooxidans (strain ATCC 23270 / DSM 14882 / CIP 104768 / NCIMB 8455) (Ferrobacillus ferrooxidans (strain ATCC 23270))).